The following is a 100-amino-acid chain: Integration host factor subunit alpha (100 aa).

This sequence belongs to the bacterial histone-like protein family. Heterodimer of an alpha and a beta chain.

In terms of biological role, this protein is one of the two subunits of integration host factor, a specific DNA-binding protein that functions in genetic recombination as well as in transcriptional and translational control. This chain is Integration host factor subunit alpha, found in Alcanivorax borkumensis (strain ATCC 700651 / DSM 11573 / NCIMB 13689 / SK2).